Consider the following 208-residue polypeptide: V-type ATP synthase subunit D (208 aa).

Belongs to the V-ATPase D subunit family.

Functionally, produces ATP from ADP in the presence of a proton gradient across the membrane. The chain is V-type ATP synthase subunit D from Streptococcus pyogenes serotype M3 (strain ATCC BAA-595 / MGAS315).